The chain runs to 398 residues: MITMIRRFIQLDAAAGVMLMMATVLALTFANWSVTAAGYQQFLMMPVEMRFGALEINKNLLLWINDGLMAIFFLLIGLEVKRELVEGSLASRQQAMLPLAAAVGGMVFPALFFLLFNANDEVTRVGWAIPAATDIAFAIGVLTLLGKRVPAGLKVFLLALAIIDDLGAILIIALFYTQQIFWPALGGAVLAVAALAYLNRQQVRKTSAYLLVGIVLWVCILKCGVHATLAGVIVGFFIPLRTSNGEPSPAVTLEHGLQTWVAFLIIPLFAFANAGIVLQGIVLEKLFSPLSLGIAAGLLVGKPLGITLLSWLTIRLGYARLPAGVGFSQIVAVSVLCGIGFTMSIFITLLAFSGGDAELITYAKLGILLASGLAALLGYLALRGVLPVLDKAVQPCKG.

Helical transmembrane passes span 14–34, 60–80, 96–116, 125–145, 155–175, 179–199, 214–234, 263–283, 292–312, 330–350, and 362–382; these read AAGV…NWSV, LLLW…GLEV, MLPL…FLLF, VGWA…LTLL, VFLL…IALF, QIFW…AYLN, IVLW…GVIV, FLII…GIVL, LGIA…LSWL, IVAV…ITLL, and YAKL…YLAL.

It belongs to the NhaA Na(+)/H(+) (TC 2.A.33) antiporter family.

Its subcellular location is the cell inner membrane. The enzyme catalyses Na(+)(in) + 2 H(+)(out) = Na(+)(out) + 2 H(+)(in). Functionally, na(+)/H(+) antiporter that extrudes sodium in exchange for external protons. The sequence is that of Na(+)/H(+) antiporter NhaA from Pectobacterium carotovorum subsp. carotovorum (strain PC1).